The sequence spans 428 residues: MLRTLLRRRLFSYPTKYYFMVLVLSLITFSVLRIHQKPEFVSVRHLELAGENPSSDINCTKVLQGDVNEIQKVKLEILTVKFKKRPRWTPDDYINMTSDCSSFIKRRKYIVEPLSKEEAEFPIAYSIVVHHKIEMLDRLLRAIYMPQNFYCIHVDTKSEDSYLAAVMGIASCFSNVFVASRLESVVYASWSRVQADLNCMKDLYAMSANWKYLINLCGMDFPIKTNLEIVRKLKLLMGENNLETERMPSHKEERWKKRYEVVNGKLTNTGTVKMLPPLETPLFSGSAYFVVSREYVGYVLQNEKIQKLMEWAQDTYSPDEYLWATIQRIPEVPGSLPASHKYDLSDMQAVARFVKWQYFEGDVSKGAPYPPCDGVHVRSVCIFGAGDLNWMLRKHHLFANKFDVDVDLFAIQCLDEHLRHKALETLKH.

The Cytoplasmic segment spans residues 1–9 (MLRTLLRRR). Positions 5–9 (LLRRR) are mediates interaction with GOLPH3 and is necessary and sufficient for localization to the Golgi. Residues 10 to 32 (LFSYPTKYYFMVLVLSLITFSVL) traverse the membrane as a helical; Signal-anchor for type II membrane protein segment. Residues 33 to 121 (RIHQKPEFVS…EPLSKEEAEF (89 aa)) are stem region. The Lumenal segment spans residues 33–428 (RIHQKPEFVS…RHKALETLKH (396 aa)). 2 N-linked (GlcNAc...) asparagine glycosylation sites follow: Asn-58 and Asn-95. 4 cysteine pairs are disulfide-bonded: Cys-59–Cys-413, Cys-100–Cys-172, Cys-151–Cys-199, and Cys-372–Cys-381. The tract at residues 122–428 (PIAYSIVVHH…RHKALETLKH (307 aa)) is catalytic. UDP-N-acetyl-alpha-D-glucosamine contacts are provided by residues 128 to 130 (VVH), 155 to 157 (DTK), and Tyr-187. A glycoprotein-binding residues include Glu-243, Lys-251, Arg-254, Glu-320, Lys-341, and Tyr-358. Glu-320 serves as the catalytic Nucleophile. UDP-N-acetyl-alpha-D-glucosamine is bound by residues Arg-378 and Lys-401.

Belongs to the glycosyltransferase 14 family. As to quaternary structure, interacts with GOLPH3; may control GCNT1 retention in the Golgi. Highly expressed in activated T-lymphocytes and myeloid cells.

It localises to the golgi apparatus membrane. The enzyme catalyses a 3-O-[beta-D-galactosyl-(1-&gt;3)-N-acetyl-alpha-D-galactosaminyl]-L-seryl-[protein] + UDP-N-acetyl-alpha-D-glucosamine = 3-O-{beta-D-galactosyl-(1-&gt;3)-[N-acetyl-beta-D-glucosaminyl-(1-&gt;6)]-N-acetyl-alpha-D-galactosaminyl}-L-seryl-[protein] + UDP + H(+). It catalyses the reaction a 3-O-[beta-D-galactosyl-(1-&gt;3)-N-acetyl-alpha-D-galactosaminyl]-L-threonyl-[protein] + UDP-N-acetyl-alpha-D-glucosamine = a 3-O-{beta-D-galactosyl-(1-&gt;3)-[N-acetyl-beta-D-glucosaminyl-(1-&gt;6)]-N-acetyl-alpha-D-galactosaminyl}-L-threonyl-[protein] + UDP + H(+). The catalysed reaction is a globoside GalGb4Cer + UDP-N-acetyl-alpha-D-glucosamine = a globoside GlcNAc-(beta1-&gt;6)-GalGb4Cer + UDP + H(+). It carries out the reaction a ganglioside GA1 + UDP-N-acetyl-alpha-D-glucosamine = a ganglioside beta-D-GlcNAc-(1-&gt;6)-GA1 + UDP + H(+). The protein operates within protein modification; protein glycosylation. It functions in the pathway glycolipid biosynthesis. Glycosyltransferase that catalyzes the transfer of an N-acetylglucosamine (GlcNAc) moiety in beta1-6 linkage from UDP-GlcNAc onto mucin-type core 1 O-glycan to form the branched mucin-type core 2 O-glycan. The catalysis is metal ion-independent and occurs with inversion of the anomeric configuration of sugar donor. Selectively involved in synthesis of mucin-type core 2 O-glycans that serve as scaffolds for the display of selectin ligand sialyl Lewis X epitope by myeloid cells, with an impact on homeostasis and recruitment to inflammatory sites. Can also act on glycolipid substrates. Transfers GlcNAc moiety to GalGb4Cer globosides in a reaction step to the synthesis of stage-specific embryonic antigen 1 (SSEA-1) determinant. Can use Galbeta1-3GalNAcalpha1- and Galbeta1-3GalNAcbeta1- oligosaccharide derivatives as acceptor substrates. The chain is Beta-1,3-galactosyl-O-glycosyl-glycoprotein beta-1,6-N-acetylglucosaminyltransferase (GCNT1) from Homo sapiens (Human).